Consider the following 553-residue polypeptide: Urocanate hydratase (553 aa).

Residues 45–46, Gln-123, 169–171, Asp-189, Arg-194, 235–236, 256–260, 266–267, Tyr-315, and Gly-485 each bind NAD(+); these read GG, GMG, NA, QTSAH, and YV.

The protein belongs to the urocanase family. NAD(+) is required as a cofactor.

It is found in the cytoplasm. It carries out the reaction 4-imidazolone-5-propanoate = trans-urocanate + H2O. It participates in amino-acid degradation; L-histidine degradation into L-glutamate; N-formimidoyl-L-glutamate from L-histidine: step 2/3. Functionally, catalyzes the conversion of urocanate to 4-imidazolone-5-propionate. The sequence is that of Urocanate hydratase from Staphylococcus aureus (strain COL).